The primary structure comprises 224 residues: 4'-phosphopantetheinyl transferase Sfp (224 aa).

3 residues coordinate Mg(2+): D107, E109, and E151. The interval 158-189 (GKGLSLPLDSFSVRLHQDGQVSIELPDSHSPC) is peptidyl carrier protein binding.

This sequence belongs to the P-Pant transferase superfamily. Gsp/Sfp/HetI/AcpT family. Monomer in solution. Mg(2+) is required as a cofactor.

The catalysed reaction is apo-[ACP] + CoA = holo-[ACP] + adenosine 3',5'-bisphosphate + H(+). Its function is as follows. Activates the seven peptidyl carrier protein (PCP) domains of the first three subunits (SrfAA, SrfAB and SrfAC) of surfactin synthetase by transferring the 4'-phosphopantetheinyl moiety of coenzyme A (CoA) to a serine residue. Required for cells of B.subtilis to become producers of the lipopeptide antibiotics surfactin and plipastatin B1. The chain is 4'-phosphopantetheinyl transferase Sfp (sfp) from Bacillus subtilis (strain 168).